Consider the following 697-residue polypeptide: Protein no-on-transient A (697 aa).

Residues 1–29 (MENSVKMDNSGNSTPLPQRQRRANNQPNK) are compositionally biased toward polar residues. Residues 1-253 (MENSVKMDNS…GGNNSQRGDD (253 aa)) form a disordered region. The segment covering 61-80 (NGGGGSVVGGGGGGGGGGGQ) has biased composition (gly residues). 2 stretches are compositionally biased toward low complexity: residues 102–118 (RGGN…NQNQ) and 139–191 (ANNA…QNQA). The segment covering 195–223 (RGGGGGGGGGGGGGGGGGGGGGGGGGGGG) has biased composition (gly residues). Positions 224–233 (GRDRNPDRRG) are enriched in basic and acidic residues. The span at 234-246 (GGGGGGQNSGGGN) shows a compositional bias: gly residues. 2 consecutive RRM domains span residues 285-357 (NRLY…FAPN) and 359-445 (TILR…DDND). Residues 488–586 (DLFKSKQDAL…DMRRRQQENT (99 aa)) are a coiled coil. Basic and acidic residues predominate over residues 551-565 (EMRKREEETMRRHQT). 2 disordered regions span residues 551–575 (EMRK…VRQE) and 601–697 (QEGF…RRRF). The span at 603–622 (GFGGGNGGGGGGGGGGGGVG) shows a compositional bias: gly residues. Low complexity-rich tracts occupy residues 623-635 (NSNF…NSNS) and 642-659 (GNNN…GANN).

In terms of biological role, required for normal vision and courtship behavior in Drosophila. In Drosophila virilis (Fruit fly), this protein is Protein no-on-transient A (nonA).